The chain runs to 927 residues: Band 3 anion transport protein (927 aa).

Met-1 carries the N-acetylmethionine modification. Residues 1 to 420 (MGDMQDHEKV…LSDITDALSP (420 aa)) are Cytoplasmic-facing. Position 18 is a phosphoserine (Ser-18). Tyr-31 and Tyr-56 each carry phosphotyrosine. The segment at 69–303 (SQVYVELQEL…LGRAAATLMT (235 aa)) is globular. The interaction with ANK1 stretch occupies residues 190 to 199 (AVLTRSGAPS). Ser-199 and Ser-222 each carry phosphoserine. The dimerization arm stretch occupies residues 317–370 (RGELLSSLDSFLDCSLVLPPTEAPSEKALLNLVPVQKELLRKRYLPRPAKPDPN). Residues 367–390 (PDPNLYEALDGGKEGPGDEDDPLR) form a disordered region. The residue at position 372 (Tyr-372) is a Phosphotyrosine. The helical transmembrane segment at 421-444 (QVLAAVIFIYFAALSPAVTFGGLL) threads the bilayer. Residues 445-452 (GEKTRNLM) lie on the Extracellular side of the membrane. The helical transmembrane segment at 453-473 (GVSELLISTAVQGILFALLGA) threads the bilayer. Residues 474–476 (QPL) lie on the Cytoplasmic side of the membrane. The chain crosses the membrane as a discontinuously helical span at residues 477-493 (LVLGFSGPLLVFEEAFY). The Extracellular segment spans residues 494–502 (SFCESNNLE). A helical membrane pass occupies residues 503-523 (YIVGRAWIGFWLILLVVLVVA). The Cytoplasmic portion of the chain corresponds to 524–535 (FEGSFLVQYISR). A helical membrane pass occupies residues 536-558 (YTQEIFSFLISLIFIYETFSKLI). At 559 to 586 (KIFQDYPLQESYAPVVMKPKPQGPVPNT) the chain is on the extracellular side. Residues 587–607 (ALLSLVLMVGTFLLAMMLRKF) traverse the membrane as a helical segment. Residues 608–618 (KNSTYFPGKLR) are Cytoplasmic-facing. Residues 619–639 (RVIGDFGVPISILIMVLVDTF) traverse the membrane as a helical segment. Over 640–679 (IKNTYTQKLSVPDGLKVSNSSARGWVIHPLGLYNHFPKWM) the chain is Extracellular. N-linked (GlcNAc...) asparagine glycosylation is present at Asn-658. A helical membrane pass occupies residues 680–700 (MFASVLPALLVFILIFLESQI). The Cytoplasmic segment spans residues 701–716 (TTLIVSKPERKMIKGS). A helical transmembrane segment spans residues 717–735 (GFHLDLLLVVGMGGVAALF). Residues 736 to 753 (GMPWLSATTVRSVTHANA) form a discontinuously helical membrane-spanning segment. Topologically, residues 754-776 (LTVMGKASGPGAAAQIQEVKEQR) are cytoplasmic. 2 helical membrane passes run 777–797 (ISGL…PILS) and 798–816 (RIPL…ITSL). The Cytoplasmic portion of the chain corresponds to 817 to 854 (SGIQLFDRILLLFKPPKYHPDVPFVKRVKTWRMHLFTG). An intramembrane region (discontinuously helical) is located at residues 855–885 (IQIICLAVLWVVKSTPASLALPFVLILTVPL). Residue Cys-859 is the site of S-palmitoyl cysteine attachment. At 886–927 (RRLLLPLIFRELELQCLDGDDAKVTFDEAEGLDEYDEVPMPV) the chain is on the cytoplasmic side. The residue at position 920 (Tyr-920) is a Phosphotyrosine.

Belongs to the anion exchanger (TC 2.A.31) family. As to quaternary structure, a dimer in solution, but in its membrane environment, it exists primarily as a mixture of dimers and tetramers and spans the membrane asymmetrically. Component of the ankyrin-1 complex in the erythrocyte, composed of ANK1, RHCE, RHAG, SLC4A1, EPB42, GYPA, GYPB and AQP1. Interacts with STOM; this interaction positively regulates SLC4A1 activity. Interacts with GYPA; a GYPA monomer is bound at each end of the SLC4A1 dimer forming a heterotetramer. Three SLC4A1 dimers (Band 3-I, Band 3-II and Band 3-III) participates in the ankyrin-1 complex. Interacts (via the cytoplasmic domain) with EPB42; this interaction is mediated by the SLC4A1 Band 3-I dimer. Interacts (via the cytoplasmic domain) directly with ANK1; this interaction is mediated by the SLC4A1 Band 3-II and Band 3-III dimers. Interacts with TMEM139. As to expression, kidney.

The protein resides in the cell membrane. The protein localises to the basolateral cell membrane. The catalysed reaction is hydrogencarbonate(in) + chloride(out) = hydrogencarbonate(out) + chloride(in). Functionally, functions both as a transporter that mediates electroneutral anion exchange across the cell membrane and as a structural protein. Component of the ankyrin-1 complex of the erythrocyte membrane; required for normal flexibility and stability of the erythrocyte membrane and for normal erythrocyte shape via the interactions of its cytoplasmic domain with cytoskeletal proteins, glycolytic enzymes, and hemoglobin. Functions as a transporter that mediates the 1:1 exchange of inorganic anions across the erythrocyte membrane. Mediates chloride-bicarbonate exchange in the kidney, and is required for normal acidification of the urine. In Rattus norvegicus (Rat), this protein is Band 3 anion transport protein.